Reading from the N-terminus, the 84-residue chain is Exodeoxyribonuclease 7 small subunit (84 aa).

It belongs to the XseB family. Heterooligomer composed of large and small subunits.

It localises to the cytoplasm. It carries out the reaction Exonucleolytic cleavage in either 5'- to 3'- or 3'- to 5'-direction to yield nucleoside 5'-phosphates.. In terms of biological role, bidirectionally degrades single-stranded DNA into large acid-insoluble oligonucleotides, which are then degraded further into small acid-soluble oligonucleotides. The protein is Exodeoxyribonuclease 7 small subunit of Caulobacter vibrioides (strain ATCC 19089 / CIP 103742 / CB 15) (Caulobacter crescentus).